We begin with the raw amino-acid sequence, 131 residues long: Acidic leucine-rich nuclear phosphoprotein 32 family member D (131 aa).

LRR repeat units follow at residues 18–38, 43–64, 65–87, 89–110, and 114–131; these read DVKE…EGLT, ELEL…PKLN, KLKK…AEKC, NLIH…EPLK, and NLES…LNNY.

It belongs to the ANP32 family.

This Homo sapiens (Human) protein is Acidic leucine-rich nuclear phosphoprotein 32 family member D (ANP32D).